The chain runs to 362 residues: Putative transport protein BB_0006 (362 aa).

The next 8 helical transmembrane spans lie at 20–40, 43–63, 68–88, 144–164, 212–232, 234–254, 265–285, and 304–326; these read FYCI…EAVF, LAIS…LARF, FLIV…IFSF, EIIG…FLLS, ILVF…WAVL, FVFN…IVIT, IVLY…NILE, and LFFW…TVIV.

The protein belongs to the autoinducer-2 exporter (AI-2E) (TC 2.A.86) family.

It is found in the cell membrane. The chain is Putative transport protein BB_0006 from Borreliella burgdorferi (strain ATCC 35210 / DSM 4680 / CIP 102532 / B31) (Borrelia burgdorferi).